Here is a 92-residue protein sequence, read N- to C-terminus: Cell division protein FtsB (92 aa).

The Cytoplasmic segment spans residues 1-3 (MRL). The chain crosses the membrane as a helical span at residues 4 to 21 (FVFFMLCLLVLLQYHLWF). Residues 22-92 (GKNGLGDRHN…TFFRIVPKED (71 aa)) are Periplasmic-facing. The stretch at 28–62 (DRHNLQEEVTLILENNSELRQRNQMMFSEIKDLKE) forms a coiled coil.

This sequence belongs to the FtsB family. In terms of assembly, part of a complex composed of FtsB, FtsL and FtsQ.

The protein localises to the cell inner membrane. In terms of biological role, essential cell division protein. May link together the upstream cell division proteins, which are predominantly cytoplasmic, with the downstream cell division proteins, which are predominantly periplasmic. The chain is Cell division protein FtsB from Psychromonas ingrahamii (strain DSM 17664 / CCUG 51855 / 37).